The chain runs to 719 residues: Fatty acid oxidation complex subunit alpha (719 aa).

The segment at 1–190 (MIYQGNRITV…KLGLVDAVVA (190 aa)) is enoyl-CoA hydratase/isomerase. Asp298 provides a ligand contact to substrate. A 3-hydroxyacyl-CoA dehydrogenase region spans residues 313 to 719 (HDINEAAVLG…AAGETFYPKA (407 aa)). NAD(+)-binding positions include Met326, Asp345, 402–404 (VVE), Lys409, and Ser431. His452 acts as the For 3-hydroxyacyl-CoA dehydrogenase activity in catalysis. Asn455 contributes to the NAD(+) binding site. Asn502 contributes to the substrate binding site.

In the N-terminal section; belongs to the enoyl-CoA hydratase/isomerase family. The protein in the C-terminal section; belongs to the 3-hydroxyacyl-CoA dehydrogenase family. As to quaternary structure, heterotetramer of two alpha chains (FadB) and two beta chains (FadA).

It carries out the reaction a (3S)-3-hydroxyacyl-CoA + NAD(+) = a 3-oxoacyl-CoA + NADH + H(+). The enzyme catalyses a (3S)-3-hydroxyacyl-CoA = a (2E)-enoyl-CoA + H2O. It catalyses the reaction a 4-saturated-(3S)-3-hydroxyacyl-CoA = a (3E)-enoyl-CoA + H2O. The catalysed reaction is (3S)-3-hydroxybutanoyl-CoA = (3R)-3-hydroxybutanoyl-CoA. It carries out the reaction a (3Z)-enoyl-CoA = a 4-saturated (2E)-enoyl-CoA. The enzyme catalyses a (3E)-enoyl-CoA = a 4-saturated (2E)-enoyl-CoA. It participates in lipid metabolism; fatty acid beta-oxidation. In terms of biological role, involved in the aerobic and anaerobic degradation of long-chain fatty acids via beta-oxidation cycle. Catalyzes the formation of 3-oxoacyl-CoA from enoyl-CoA via L-3-hydroxyacyl-CoA. It can also use D-3-hydroxyacyl-CoA and cis-3-enoyl-CoA as substrate. This chain is Fatty acid oxidation complex subunit alpha, found in Psychrobacter sp. (strain PRwf-1).